Consider the following 180-residue polypeptide: Progesterone receptor (180 aa).

The NR C4-type zinc finger occupies K1–C11. Residues K1 to M16 constitute a DNA-binding region (nuclear receptor). The residue at position 60 (S60) is a Phosphoserine. The NR LBD domain maps to Q63–S180. An AF2; mediates transcriptional activation region spans residues L71–S180. R150 provides a ligand contact to progesterone.

It belongs to the nuclear hormone receptor family. NR3 subfamily. Interacts with SMARD1 and UNC45A. Interacts with CUEDC2; the interaction promotes ubiquitination, decreases sumoylation, and represses transcriptional activity. Interacts with PIAS3; the interaction promotes sumoylation of PR in a hormone-dependent manner, inhibits DNA-binding, and alters nuclear export. Interacts with SP1; the interaction requires ligand-induced phosphorylation by ERK1/2-MAPK. Interacts with PRMT2. Interacts with NCOA2 and NCOA1. Interacts with KLF9. Interacts with GTF2B. Post-translationally, phosphorylated on multiple serine sites. Several of these sites are hormone-dependent. In terms of processing, sumoylation is hormone-dependent and represses transcriptional activity. Sumoylation on all three sites is enhanced by PIAS3. Desumoylated by SENP1. Sumoylation is repressed by ubiquitination and modulated by phosphorylation. Ubiquitination is hormone-dependent and represses sumoylation. Post-translationally, palmitoylated by ZDHHC7 and ZDHHC21. Palmitoylation is required for plasma membrane targeting and for rapid intracellular signaling via ERK and AKT kinases and cAMP generation.

The protein resides in the nucleus. It localises to the cytoplasm. In terms of biological role, the steroid hormones and their receptors are involved in the regulation of eukaryotic gene expression and affect cellular proliferation and differentiation in target tissues. Transcriptional activator of several progesteron-dependent promoters in a variety of cell types. Involved in activation of SRC-dependent MAPK signaling on hormone stimulation. This is Progesterone receptor (PGR) from Notamacropus eugenii (Tammar wallaby).